The chain runs to 268 residues: Imidazole glycerol phosphate synthase subunit HisF (268 aa).

Residues Asp12 and Asp131 contribute to the active site.

It belongs to the HisA/HisF family. Heterodimer of HisH and HisF.

The protein resides in the cytoplasm. It carries out the reaction 5-[(5-phospho-1-deoxy-D-ribulos-1-ylimino)methylamino]-1-(5-phospho-beta-D-ribosyl)imidazole-4-carboxamide + L-glutamine = D-erythro-1-(imidazol-4-yl)glycerol 3-phosphate + 5-amino-1-(5-phospho-beta-D-ribosyl)imidazole-4-carboxamide + L-glutamate + H(+). The protein operates within amino-acid biosynthesis; L-histidine biosynthesis; L-histidine from 5-phospho-alpha-D-ribose 1-diphosphate: step 5/9. In terms of biological role, IGPS catalyzes the conversion of PRFAR and glutamine to IGP, AICAR and glutamate. The HisF subunit catalyzes the cyclization activity that produces IGP and AICAR from PRFAR using the ammonia provided by the HisH subunit. The sequence is that of Imidazole glycerol phosphate synthase subunit HisF from Methanoregula boonei (strain DSM 21154 / JCM 14090 / 6A8).